The primary structure comprises 235 residues: Small ribosomal subunit protein eS4 (235 aa).

One can recognise an S4 RNA-binding domain in the interval 38–101; that stretch reads IPLLVLVRDF…EKSYRILFDE (64 aa).

Belongs to the eukaryotic ribosomal protein eS4 family.

The chain is Small ribosomal subunit protein eS4 (rps4e) from Archaeoglobus fulgidus (strain ATCC 49558 / DSM 4304 / JCM 9628 / NBRC 100126 / VC-16).